Consider the following 842-residue polypeptide: Envelope glycoprotein gp160 (842 aa).

An N-terminal signal peptide occupies residues 1-23 (MGMKSGWLLFYLLVSLIKVIGSE). At 24-663 (QHWVTVYYGV…ITKWLWYIKI (640 aa)) the chain is on the extracellular side. A disulfide bridge connects residues cysteine 45 and cysteine 65. Residues asparagine 79, asparagine 123, asparagine 131, asparagine 134, asparagine 149, asparagine 153, asparagine 181, asparagine 190, asparagine 225, asparagine 229, asparagine 234, asparagine 255, asparagine 267, asparagine 278, asparagine 284, asparagine 290, asparagine 320, asparagine 331, and asparagine 345 are each glycosylated (N-linked (GlcNAc...) asparagine; by host). Cystine bridges form between cysteine 110–cysteine 198, cysteine 117–cysteine 189, cysteine 122–cysteine 150, cysteine 211–cysteine 240, and cysteine 221–cysteine 232. The segment at 122 to 149 (CNDSYGEERNNTNMTTREPDIGYKQMKN) is V1. The segment at 150 to 189 (CSFNATTELTDKKKQVYSLFYVEDVVPINAYNKTYRLINC) is V2. A V3 region spans residues 285–318 (CTRPGNNTGGQVQIGPAMTFYNIEKIVGDIRQAY). Cysteine 285 and cysteine 319 are disulfide-bonded. Positions 353–363 (RNEGDLEVTHL) are CD4-binding loop. Intrachain disulfides connect cysteine 367–cysteine 423 and cysteine 374–cysteine 396. Residues 374–396 (CNTSKLFNEELLNETGEPITLPC) form a V4 region. Asparagine 375, asparagine 386, asparagine 422, and asparagine 426 each carry an N-linked (GlcNAc...) asparagine; by host glycan. V5 stretches follow at residues 439–448 (DTKETIVYPS) and 441–448 (KETIVYPS). The tract at residues 489-510 (AAFGLGALFLGFLGAAGSTMGA) is fusion peptide. An immunosuppression region spans residues 552–570 (KQLQAKVLAIERYLRDQQI). The cysteines at positions 576 and 582 are disulfide-linked. N-linked (GlcNAc...) asparagine; by host glycans are attached at residues asparagine 589, asparagine 594, asparagine 595, asparagine 604, and asparagine 616. A coiled-coil region spans residues 612 to 646 (EKVRNYSGVIFGLIEQAQEQQNTNEKSLLELDQWD). The interval 641 to 662 (ELDQWDSLWSWFGITKWLWYIK) is MPER; binding to GalCer. Residues 664-684 (AIMIVAGIVGIRIISIVITII) traverse the membrane as a helical segment. Topologically, residues 685–842 (ARVRQGYSPL…IRQGLERALI (158 aa)) are cytoplasmic. The short motif at 691–694 (YSPL) is the YXXL motif; contains endocytosis signal element.

This sequence belongs to the HIV-1 env protein family. The mature envelope protein (Env) consists of a homotrimer of non-covalently associated gp120-gp41 heterodimers. The resulting complex protrudes from the virus surface as a spike. There seems to be as few as 10 spikes on the average virion. Interacts with host CD4, CCR5 and CXCR4. Gp120 also interacts with the C-type lectins CD209/DC-SIGN and CLEC4M/DC-SIGNR (collectively referred to as DC-SIGN(R)). Gp120 and gp41 interact with GalCer. Gp120 interacts with host ITGA4/ITGB7 complex; on CD4+ T-cells, this interaction results in rapid activation of integrin ITGAL/LFA-1, which facilitates efficient cell-to-cell spreading of HIV-1. Gp120 interacts with cell-associated heparan sulfate; this interaction increases virus infectivity on permissive cells and may be involved in infection of CD4- cells. As to quaternary structure, the mature envelope protein (Env) consists of a homotrimer of non-covalently associated gp120-gp41 heterodimers. The resulting complex protrudes from the virus surface as a spike. There seems to be as few as 10 spikes on the average virion. In terms of processing, highly glycosylated by host. The high number of glycan on the protein is reffered to as 'glycan shield' because it contributes to hide protein sequence from adaptive immune system. Post-translationally, palmitoylation of the transmembrane protein and of Env polyprotein (prior to its proteolytic cleavage) is essential for their association with host cell membrane lipid rafts. Palmitoylation is therefore required for envelope trafficking to classical lipid rafts, but not for viral replication. Specific enzymatic cleavages in vivo yield mature proteins. Envelope glycoproteins are synthesized as an inactive precursor that is heavily N-glycosylated and processed likely by host cell furin in the Golgi to yield the mature SU and TM proteins. The cleavage site between SU and TM requires the minimal sequence [KR]-X-[KR]-R. About 2 of the 9 disulfide bonds of gp41 are reduced by P4HB/PDI, following binding to CD4 receptor.

The protein resides in the virion membrane. The protein localises to the host cell membrane. It is found in the host endosome membrane. In terms of biological role, oligomerizes in the host endoplasmic reticulum into predominantly trimers. In a second time, gp160 transits in the host Golgi, where glycosylation is completed. The precursor is then proteolytically cleaved in the trans-Golgi and thereby activated by cellular furin or furin-like proteases to produce gp120 and gp41. Functionally, attaches the virus to the host lymphoid cell by binding to the primary receptor CD4. This interaction induces a structural rearrangement creating a high affinity binding site for a chemokine coreceptor like CXCR4 and/or CCR5. Acts as a ligand for CD209/DC-SIGN and CLEC4M/DC-SIGNR, which are respectively found on dendritic cells (DCs), and on endothelial cells of liver sinusoids and lymph node sinuses. These interactions allow capture of viral particles at mucosal surfaces by these cells and subsequent transmission to permissive cells. HIV subverts the migration properties of dendritic cells to gain access to CD4+ T-cells in lymph nodes. Virus transmission to permissive T-cells occurs either in trans (without DCs infection, through viral capture and transmission), or in cis (following DCs productive infection, through the usual CD4-gp120 interaction), thereby inducing a robust infection. In trans infection, bound virions remain infectious over days and it is proposed that they are not degraded, but protected in non-lysosomal acidic organelles within the DCs close to the cell membrane thus contributing to the viral infectious potential during DCs' migration from the periphery to the lymphoid tissues. On arrival at lymphoid tissues, intact virions recycle back to DCs' cell surface allowing virus transmission to CD4+ T-cells. Its function is as follows. Acts as a class I viral fusion protein. Under the current model, the protein has at least 3 conformational states: pre-fusion native state, pre-hairpin intermediate state, and post-fusion hairpin state. During fusion of viral and target intracellular membranes, the coiled coil regions (heptad repeats) assume a trimer-of-hairpins structure, positioning the fusion peptide in close proximity to the C-terminal region of the ectodomain. The formation of this structure appears to drive apposition and subsequent fusion of viral and target cell membranes. Complete fusion occurs in host cell endosomes and is dynamin-dependent, however some lipid transfer might occur at the plasma membrane. The virus undergoes clathrin-dependent internalization long before endosomal fusion, thus minimizing the surface exposure of conserved viral epitopes during fusion and reducing the efficacy of inhibitors targeting these epitopes. Membranes fusion leads to delivery of the nucleocapsid into the cytoplasm. This Human immunodeficiency virus type 1 group N (isolate YBF30) (HIV-1) protein is Envelope glycoprotein gp160.